The sequence spans 582 residues: Phosphoribosylaminoimidazole carboxylase (582 aa).

The ATP-grasp domain maps to 114-305; that stretch reads KKYLAERGVA…QFENHLRAIL (192 aa). Residue 143-200 coordinates ATP; it reads AGRLGLPLMLKAKTLAYDGRGNSPLKSASSGDIQASLKFLGDRPLYAEGWAPFVKEVA.

In the C-terminal section; belongs to the AIR carboxylase family. Class I subfamily.

It carries out the reaction 5-amino-1-(5-phospho-D-ribosyl)imidazole-4-carboxylate + H(+) = 5-amino-1-(5-phospho-beta-D-ribosyl)imidazole + CO2. It participates in purine metabolism; IMP biosynthesis via de novo pathway; 5-amino-1-(5-phospho-D-ribosyl)imidazole-4-carboxylate from 5-amino-1-(5-phospho-D-ribosyl)imidazole (carboxylase route): step 1/1. The chain is Phosphoribosylaminoimidazole carboxylase (ADE2) from Cryptococcus neoformans var. neoformans serotype D (strain JEC21 / ATCC MYA-565) (Filobasidiella neoformans).